The following is a 137-amino-acid chain: ATP synthase epsilon chain (137 aa).

This sequence belongs to the ATPase epsilon chain family. In terms of assembly, F-type ATPases have 2 components, CF(1) - the catalytic core - and CF(0) - the membrane proton channel. CF(1) has five subunits: alpha(3), beta(3), gamma(1), delta(1), epsilon(1). CF(0) has three main subunits: a, b and c.

The protein localises to the cell membrane. Its function is as follows. Produces ATP from ADP in the presence of a proton gradient across the membrane. This is ATP synthase epsilon chain from Thermobifida fusca (strain YX).